The chain runs to 407 residues: 1-deoxy-D-xylulose 5-phosphate reductoisomerase (407 aa).

The NADPH site is built by Thr25, Gly26, Ser27, Ile28, Asn53, and Asn136. Lys137 lines the 1-deoxy-D-xylulose 5-phosphate pocket. NADPH is bound at residue Glu138. Position 162 (Asp162) interacts with Mn(2+). 1-deoxy-D-xylulose 5-phosphate is bound by residues Ser163, Glu164, Ser188, and His211. Mn(2+) is bound at residue Glu164. An NADPH-binding site is contributed by Gly217. Residues Ser224, Asn229, Lys230, and Glu233 each coordinate 1-deoxy-D-xylulose 5-phosphate. Glu233 lines the Mn(2+) pocket.

Belongs to the DXR family. Mg(2+) is required as a cofactor. It depends on Mn(2+) as a cofactor.

The enzyme catalyses 2-C-methyl-D-erythritol 4-phosphate + NADP(+) = 1-deoxy-D-xylulose 5-phosphate + NADPH + H(+). Its pathway is isoprenoid biosynthesis; isopentenyl diphosphate biosynthesis via DXP pathway; isopentenyl diphosphate from 1-deoxy-D-xylulose 5-phosphate: step 1/6. In terms of biological role, catalyzes the NADPH-dependent rearrangement and reduction of 1-deoxy-D-xylulose-5-phosphate (DXP) to 2-C-methyl-D-erythritol 4-phosphate (MEP). The chain is 1-deoxy-D-xylulose 5-phosphate reductoisomerase from Bradyrhizobium diazoefficiens (strain JCM 10833 / BCRC 13528 / IAM 13628 / NBRC 14792 / USDA 110).